A 112-amino-acid polypeptide reads, in one-letter code: MYQLLFEIKVKIKIQTEKKKKLNIKLDIVGEGSCILFSINTNNKMIYLFSYFFLMSSGKKNINKYKKILVRNLKRVYAQCIYIARKKNKQWHYSACGWQCSSVAFSKNLECV.

This is an uncharacterized protein from Saccharomyces cerevisiae (strain ATCC 204508 / S288c) (Baker's yeast).